Consider the following 2326-residue polypeptide: Nonribosomal peptide synthetase inpB (2326 aa).

In terms of domain architecture, Carrier 1 spans 8-84 (SPSEWLQLEL…SLYSMAQGPA (77 aa)). Serine 45 carries the post-translational modification O-(pantetheine 4'-phosphoryl)serine. The interval 87–121 (ASSSTSDNASDKDSSLDDSETGALTPTTDAGSSLA) is disordered. The segment covering 108–121 (GALTPTTDAGSSLA) has biased composition (polar residues). The interval 144–568 (QAVVPCSAIQ…LLSPGEVSQL (425 aa)) is condensation 1. Residues 593–997 (LQPGAAAVNS…GRRDTQVKIR (405 aa)) form an adenylation 1 region. The Carrier 2 domain maps to 1145-1221 (EPSTETEFKL…DLARAVESRV (77 aa)). Serine 1182 carries the post-translational modification O-(pantetheine 4'-phosphoryl)serine. The interval 1226–1247 (DEEDPAPFSVWRESRGSEPSEE) is disordered. The interval 1266–1680 (EDVLPCTALQ…LLSPEDVNQL (415 aa)) is condensation 2. The segment at 1702 to 2097 (EVARSRPGAA…GRIDTQIKIR (396 aa)) is adenylation 2. The Carrier 3 domain maps to 2216-2294 (PPSTEMEKAL…DLAVLLEKRP (79 aa)). Serine 2253 is subject to O-(pantetheine 4'-phosphoryl)serine.

Belongs to the NRP synthetase family.

It functions in the pathway secondary metabolite biosynthesis. In terms of biological role, nonribosomal peptide synthetase; part of the inp gene cluster that mediates the biosynthesis of fellutamide B, a mycotoxin that acts as a proteasome inhibitor. In the first step of fellutabmide B biosynthesis inpC activates 3-hydroxydodecanoic acid to generate 3-hydroxydodecanoyl-AMP that is then loaded onto the T0 domain of inpB. The 3-hydroxydodecanoyl-S-phosphopantetheinyl-T0 is sequentially extended with L-Asn and L-Gln by the two CAT modules of inpB. The linear lipodipeptide from inpB is then transferred onto inpA for the addition of the third amino acid, L-Leu. Reductive releasing of the lipotripeptide by the TE domain of inpA produces (2S)-fellutamide B. InpF might be involved in the release and transfer of the lipodipeptide from inpB to inpA. The inp cluster-encoded proteasome subunit inpE confers resistance to internally produced fellutamides. The MFS efflux transporter inpD may contribute to fellutamide resistance as well. In Emericella nidulans (strain FGSC A4 / ATCC 38163 / CBS 112.46 / NRRL 194 / M139) (Aspergillus nidulans), this protein is Nonribosomal peptide synthetase inpB.